The following is a 116-amino-acid chain: Large ribosomal subunit protein bL17 (116 aa).

Belongs to the bacterial ribosomal protein bL17 family. Part of the 50S ribosomal subunit. Contacts protein L32.

This is Large ribosomal subunit protein bL17 from Prochlorococcus marinus (strain MIT 9303).